A 390-amino-acid chain; its full sequence is Homoserine O-succinyltransferase (390 aa).

The 311-residue stretch at 59–369 (NAVLVCHALN…PHGHDAFLLD (311 aa)) folds into the AB hydrolase-1 domain. The Nucleophile role is filled by S165. Residue R235 participates in substrate binding. Residues D330 and H363 contribute to the active site. D364 provides a ligand contact to substrate.

The protein belongs to the AB hydrolase superfamily. MetX family. Homodimer.

It localises to the cytoplasm. The catalysed reaction is L-homoserine + succinyl-CoA = O-succinyl-L-homoserine + CoA. It functions in the pathway amino-acid biosynthesis; L-methionine biosynthesis via de novo pathway; O-succinyl-L-homoserine from L-homoserine: step 1/1. Transfers a succinyl group from succinyl-CoA to L-homoserine, forming succinyl-L-homoserine. This is Homoserine O-succinyltransferase from Cupriavidus pinatubonensis (strain JMP 134 / LMG 1197) (Cupriavidus necator (strain JMP 134)).